A 355-amino-acid chain; its full sequence is Phosphate acyltransferase (355 aa).

This sequence belongs to the PlsX family. Homodimer. Probably interacts with PlsY.

The protein resides in the cytoplasm. It carries out the reaction a fatty acyl-[ACP] + phosphate = an acyl phosphate + holo-[ACP]. It participates in lipid metabolism; phospholipid metabolism. Catalyzes the reversible formation of acyl-phosphate (acyl-PO(4)) from acyl-[acyl-carrier-protein] (acyl-ACP). This enzyme utilizes acyl-ACP as fatty acyl donor, but not acyl-CoA. The polypeptide is Phosphate acyltransferase (Azorhizobium caulinodans (strain ATCC 43989 / DSM 5975 / JCM 20966 / LMG 6465 / NBRC 14845 / NCIMB 13405 / ORS 571)).